Consider the following 445-residue polypeptide: 3-phosphoshikimate 1-carboxyvinyltransferase (445 aa).

3-phosphoshikimate contacts are provided by lysine 25, serine 26, and arginine 30. Residue lysine 25 participates in phosphoenolpyruvate binding. Residues glycine 98 and arginine 126 each contribute to the phosphoenolpyruvate site. 3-phosphoshikimate contacts are provided by serine 171, glutamine 173, aspartate 324, and lysine 351. Residue glutamine 173 participates in phosphoenolpyruvate binding. Aspartate 324 functions as the Proton acceptor in the catalytic mechanism. 2 residues coordinate phosphoenolpyruvate: arginine 355 and arginine 398.

It belongs to the EPSP synthase family. As to quaternary structure, monomer.

The protein localises to the cytoplasm. It catalyses the reaction 3-phosphoshikimate + phosphoenolpyruvate = 5-O-(1-carboxyvinyl)-3-phosphoshikimate + phosphate. It functions in the pathway metabolic intermediate biosynthesis; chorismate biosynthesis; chorismate from D-erythrose 4-phosphate and phosphoenolpyruvate: step 6/7. In terms of biological role, catalyzes the transfer of the enolpyruvyl moiety of phosphoenolpyruvate (PEP) to the 5-hydroxyl of shikimate-3-phosphate (S3P) to produce enolpyruvyl shikimate-3-phosphate and inorganic phosphate. The protein is 3-phosphoshikimate 1-carboxyvinyltransferase of Hydrogenovibrio crunogenus (strain DSM 25203 / XCL-2) (Thiomicrospira crunogena).